We begin with the raw amino-acid sequence, 134 residues long: MPDDDLQHRSQDILARLAAVIESRKIAHGGDPTKSYVARLLHQGPDAFLKKIGEEATEVVMAAKDADHGADKAKIICEVADLWFHCMVALAHYGLTPDQVLAELQRRAGSSGIEEKALRKLLGRGSADQARESP.

The protein belongs to the PRA-PH family.

The protein resides in the cytoplasm. It catalyses the reaction 1-(5-phospho-beta-D-ribosyl)-ATP + H2O = 1-(5-phospho-beta-D-ribosyl)-5'-AMP + diphosphate + H(+). The protein operates within amino-acid biosynthesis; L-histidine biosynthesis; L-histidine from 5-phospho-alpha-D-ribose 1-diphosphate: step 2/9. This Verminephrobacter eiseniae (strain EF01-2) protein is Phosphoribosyl-ATP pyrophosphatase.